Here is a 295-residue protein sequence, read N- to C-terminus: Nucleotide-binding protein PEPE_0450 (295 aa).

Residue 12-19 (GMSGAGKT) coordinates ATP. 62–65 (DLRS) contributes to the GTP binding site.

This sequence belongs to the RapZ-like family.

Its function is as follows. Displays ATPase and GTPase activities. This Pediococcus pentosaceus (strain ATCC 25745 / CCUG 21536 / LMG 10740 / 183-1w) protein is Nucleotide-binding protein PEPE_0450.